The chain runs to 316 residues: Ornithine carbamoyltransferase (316 aa).

Residues 57-60 (STRT), Gln84, Arg108, and 135-138 (HPCQ) each bind carbamoyl phosphate. L-ornithine is bound by residues Asn166, Asp230, and 234 to 235 (SM). Carbamoyl phosphate-binding positions include 269–270 (CL) and Arg297.

It belongs to the aspartate/ornithine carbamoyltransferase superfamily. OTCase family.

The protein resides in the cytoplasm. The enzyme catalyses carbamoyl phosphate + L-ornithine = L-citrulline + phosphate + H(+). Its pathway is amino-acid biosynthesis; L-arginine biosynthesis; L-arginine from L-ornithine and carbamoyl phosphate: step 1/3. Its function is as follows. Reversibly catalyzes the transfer of the carbamoyl group from carbamoyl phosphate (CP) to the N(epsilon) atom of ornithine (ORN) to produce L-citrulline. In Bacillus thuringiensis subsp. konkukian (strain 97-27), this protein is Ornithine carbamoyltransferase.